The following is a 305-amino-acid chain: Dioxygenase hkm4 (305 aa).

3 residues coordinate Fe cation: His-140, Asp-142, and His-216.

It belongs to the PhyH family. It depends on Fe cation as a cofactor.

The protein operates within secondary metabolite biosynthesis. In terms of biological role, dioxygenase; part of the gene cluster that mediates the biosynthesis of hancockiamides, an unusual new family of N-cinnamoylated piperazines. The NRPS hkm10 and the NmrA-like reductase hkm9 are proposed to convert two molecules of L-Phe to the intermediary piperazine called xenocockiamide A. Xenocockiamide A is then converted to hancockiamide D via a series of hydroxylations and O-methylations. The tyrosinase hkm6 may catalyze an aromatic hydroxylation, then the 2-oxoglutarate-dependent Fe(II) dioxygenase hkm4 and the FAD-dependent phenol hydroxylase hkm7 may catalyze consecutive hydroxylations to install 2 more hydroxy groups, and the methyltransferase hkm8 probably catalyzes two methylations using 2 molecules of S-adenosyl-L-methionine (SAM). The NRPS hkm11 activates and transfers trans-cinnamate supplied by the PAL hkm12 to hancockiamide D and produces hancockiamide A. NRPS Hkm11 has the flexibility to tolerate the bulky hancockiamide G as a substrate and the absence of the acetyl-transferase hkm3 opens up the opportunity for hkm11 to introduce a second N-cinnamoyl moiety. The cytochrome P450 monooxygenase hkm5 catalyzes the methylenedioxy bridge formation, converting hancockiamide A into hancockiamide G. Hkm5 can also convert hancockiamide B into hancockiamide C, and hancockiamide D into hancockiamide H. The N-acetyltransferase hkm3 finally transfers an acetyl group to 1-N of piperazine, converting hancockiamide A into hancockiamide B and hancockiamide G into hancockiamide C. The chain is Dioxygenase hkm4 from Aspergillus hancockii.